A 426-amino-acid polypeptide reads, in one-letter code: MVLSVPVIALGATLGTATSILALCGVTCLCRHMHPKKGLLPRDREPDPEKARPGVLQAAQQFNIKKSTEPVQPRPLLKFPDIYGPRPAVTAPEVINYADYTLETTEESAAPASPQAQSDSRLKRQVTEELSIRPQNGVVEDVCVMETWNPEKAASWNQAPKLHFRLDYDQKKAELFVTSLEAVTSDHEGGCDCYIQGSVAVKTGSVEAQTALKKRQLHTTWEEGLALPLGEEELPTATLTLTLRTCDRFSRHSVIGELRLGLDGASVPLGAAQWGELKTTAKEPSAGAGEVLLSISYLPAANRLLVVLIKAKNLHSNQSKELLGKDVSVKVTLKHQAQKLKKKQTKRAKHKINPVWNEMIMFELPDDLLRASSVELEVLGQGEEGPSCELGHCSLGLHASGSERSHWEEMLKNPRRQIAMWHQLHL.

Residues 1–6 lie on the Vesicular side of the membrane; that stretch reads MVLSVP. A helical membrane pass occupies residues 7 to 29; it reads VIALGATLGTATSILALCGVTCL. Topologically, residues 30 to 426 are cytoplasmic; that stretch reads CRHMHPKKGL…QIAMWHQLHL (397 aa). 2 consecutive C2 domains span residues 158 to 275 and 287 to 422; these read QAPK…AQWG and GAGE…AMWH.

Belongs to the synaptotagmin family. As to quaternary structure, interacts with NRXN1. In terms of tissue distribution, expressed in brain, heart, spleen, lung and testis.

The protein resides in the cytoplasmic vesicle membrane. May be involved in transport vesicle docking to the plasma membrane. The sequence is that of Synaptotagmin-13 (Syt13) from Mus musculus (Mouse).